The following is a 307-amino-acid chain: N-acetylneuraminate lyase (307 aa).

Positions 51 and 52 each coordinate aceneuramate. The active-site Proton donor is Tyr-143. The Schiff-base intermediate with substrate role is filled by Lys-173. Residues Ser-175, Gly-199, Asp-201, Glu-202, and Ser-218 each coordinate aceneuramate.

It belongs to the DapA family. NanA subfamily. In terms of assembly, homotetramer.

It localises to the cytoplasm. The enzyme catalyses aceneuramate = aldehydo-N-acetyl-D-mannosamine + pyruvate. It participates in amino-sugar metabolism; N-acetylneuraminate degradation. Catalyzes the cleavage of N-acetylneuraminic acid (sialic acid) to form pyruvate and N-acetylmannosamine via a Schiff base intermediate. It prevents sialic acids from being recycled and returning to the cell surface. Involved in the N-glycolylneuraminic acid (Neu5Gc) degradation pathway. The protein is N-acetylneuraminate lyase of Danio rerio (Zebrafish).